The chain runs to 148 residues: SsrA-binding protein (148 aa).

The disordered stretch occupies residues 123-148 (KLHDKRETEKKRDWEREKARIMRSAT). A compositionally biased stretch (basic and acidic residues) spans 126 to 142 (DKRETEKKRDWEREKAR).

This sequence belongs to the SmpB family.

The protein resides in the cytoplasm. Its function is as follows. Required for rescue of stalled ribosomes mediated by trans-translation. Binds to transfer-messenger RNA (tmRNA), required for stable association of tmRNA with ribosomes. tmRNA and SmpB together mimic tRNA shape, replacing the anticodon stem-loop with SmpB. tmRNA is encoded by the ssrA gene; the 2 termini fold to resemble tRNA(Ala) and it encodes a 'tag peptide', a short internal open reading frame. During trans-translation Ala-aminoacylated tmRNA acts like a tRNA, entering the A-site of stalled ribosomes, displacing the stalled mRNA. The ribosome then switches to translate the ORF on the tmRNA; the nascent peptide is terminated with the 'tag peptide' encoded by the tmRNA and targeted for degradation. The ribosome is freed to recommence translation, which seems to be the essential function of trans-translation. This is SsrA-binding protein from Burkholderia thailandensis (strain ATCC 700388 / DSM 13276 / CCUG 48851 / CIP 106301 / E264).